Consider the following 413-residue polypeptide: Large ribosomal subunit protein uL4 (413 aa).

Residue A2 is modified to N-acetylalanine. The residue at position 14 (K14) is an N6-acetyllysine. The residue at position 97 (R97) is an Omega-N-methylarginine. Residue K106 is modified to N6-acetyllysine. K239 is covalently cross-linked (Glycyl lysine isopeptide (Lys-Gly) (interchain with G-Cter in SUMO2)). K259 is modified (N6-acetyllysine). Position 266 is a phosphothreonine (T266). Phosphoserine occurs at positions 290 and 295. R300 is subject to Citrulline. K327 is covalently cross-linked (Glycyl lysine isopeptide (Lys-Gly) (interchain with G-Cter in SUMO2)). K333 carries the N6-acetyllysine modification. A disordered region spans residues 355–413 (AAALAAKSDPKEAPAKKKPVVGKKKKPVVGRKAAAAKKPAADKKAADKRAGPEDKKPAA). K361 bears the N6-acetyllysine; alternate mark. Residue K361 forms a Glycyl lysine isopeptide (Lys-Gly) (interchain with G-Cter in SUMO1); alternate linkage. S362 is modified (phosphoserine). Residues 370–383 (KKKPVVGKKKKPVV) show a composition bias toward basic residues. A compositionally biased stretch (basic and acidic residues) spans 393-413 (PAADKKAADKRAGPEDKKPAA).

Belongs to the universal ribosomal protein uL4 family. As to quaternary structure, component of the large ribosomal subunit. May bind IPO9 with low affinity. Interacts with RBM3. In terms of processing, citrullinated by PADI4.

It localises to the cytoplasm. Its function is as follows. Component of the large ribosomal subunit. The ribosome is a large ribonucleoprotein complex responsible for the synthesis of proteins in the cell. This is Large ribosomal subunit protein uL4 (RPL4) from Oryctolagus cuniculus (Rabbit).